The following is a 278-amino-acid chain: MSIRKTGIVFQRFGKQFKVFVENQTLVAFAQKKLQWKRDFKLLVGDKVTLENGVIVAVEERKNTLVRPKVVNVDQVVIVQSLIEPKINWQQLFKLLIHFHAQNVARLVLVITKNDLEFEPAEKARLSELTSFGYQLFFTAPNADLPLTLFTELQNRFSVFMGQSGVGKSSLINRLDSQIHQAIQALSAHQFGKNTTTSTVMFPFQNGFICDTPGFNVIDFPNLKQLAAQHFVGFASLIGQCHFSNCTHQSEKGCFIVSAVTQKSYSLWLYESYLKLIN.

Residues 62–218 (KNTLVRPKVV…ICDTPGFNVI (157 aa)) form the CP-type G domain. GTP-binding positions include 112 to 115 (TKND) and 162 to 170 (GQSGVGKSS). Zn(2+) is bound by residues Cys241, Cys246, His248, and Cys254.

The protein belongs to the TRAFAC class YlqF/YawG GTPase family. RsgA subfamily. As to quaternary structure, monomer. Associates with 30S ribosomal subunit, binds 16S rRNA. The cofactor is Zn(2+).

It localises to the cytoplasm. Its function is as follows. One of several proteins that assist in the late maturation steps of the functional core of the 30S ribosomal subunit. Helps release RbfA from mature subunits. May play a role in the assembly of ribosomal proteins into the subunit. Circularly permuted GTPase that catalyzes slow GTP hydrolysis, GTPase activity is stimulated by the 30S ribosomal subunit. The polypeptide is Small ribosomal subunit biogenesis GTPase RsgA (Mycoplasma pneumoniae (strain ATCC 29342 / M129 / Subtype 1) (Mycoplasmoides pneumoniae)).